The sequence spans 155 residues: Cyanate hydratase (155 aa).

Active-site residues include Arg-101, Glu-104, and Ser-127.

This sequence belongs to the cyanase family.

The catalysed reaction is cyanate + hydrogencarbonate + 3 H(+) = NH4(+) + 2 CO2. In terms of biological role, catalyzes the reaction of cyanate with bicarbonate to produce ammonia and carbon dioxide. This is Cyanate hydratase from Coccidioides posadasii (strain C735) (Valley fever fungus).